Consider the following 439-residue polypeptide: Forkhead box protein J1-A (439 aa).

Residues 124-218 (KPPYSYATLI…INGAMKKRRL (95 aa)) constitute a DNA-binding region (fork-head). Residues 273 to 293 (EHGWNSISDGKSHKRKQPLPK) are disordered. Residues 284-293 (SHKRKQPLPK) are compositionally biased toward basic residues.

The protein belongs to the FOXJ1 family. Expressed in two independent areas of stage 10-11 embryos; in the dorsal blastopore lip (Spemann organizer) and shortly after in the ectodermal cells of the animal cap. As development proceeds, cells of the animal cap contribute to the epidermis and show a spotty pattern, which suggests expression in ciliated epidermal cells. Distribution of these cells is uniform in the trunk area of the embryo but more random in the head, being practically absent in the cement gland and olfactory placode. The spotted pattern becomes more dispersed as embryos grow in size. Due to cell movements during gastrulation, expression in the dorsal lip becomes located in the dorsal midline with expression restricted to the neuroectoderm. Expressed transiently in cells of the newly formed neural floor plate in the tail of older tadpoles.

It is found in the nucleus. Its function is as follows. Key transcription factor required for motile ciliogenesis. Activates genes essential for motile cilia formation and function. Required for ciliogenesis in multiciliated cells. The protein is Forkhead box protein J1-A (foxj1-a) of Xenopus laevis (African clawed frog).